We begin with the raw amino-acid sequence, 38 residues long: Toxin Lqh 8/6 (38 aa).

Disulfide bonds link C2–C19, C5–C28, C16–C33, and C20–C35.

Expressed by the venom gland.

The protein localises to the secreted. Its function is as follows. Toxin with unknown function in healthy organisms. On glioma cells, interacts with chloride channels (probably ClC-3/CLCN3) and MMP2 at the surface of glioma cells. This complex is then internalized via caveolae, thus inhibiting the chloride channels necessary for cell shrinkage and tumor propagation. This Leiurus hebraeus (Hebrew deathstalker scorpion) protein is Toxin Lqh 8/6.